The primary structure comprises 310 residues: Adenylyl-sulfate kinase 4, chloroplastic (310 aa).

Residues 1–75 (MDVAAMARCV…MAKDESISSR (75 aa)) constitute a chloroplast transit peptide. 116-124 (GLSGSGKSS) serves as a coordination point for ATP. Substrate contacts are provided by residues D146, R149, R163, N166, 189-190 (IS), and G239. S190 serves as the catalytic Phosphoserine intermediate.

The protein belongs to the APS kinase family. Homodimer; disulfide-linked. Expressed in root vasculature, root tips, leaf epidermal and guard cells, pollen grains and radicle of immature seeds.

The protein localises to the plastid. The protein resides in the chloroplast. The catalysed reaction is adenosine 5'-phosphosulfate + ATP = 3'-phosphoadenylyl sulfate + ADP + H(+). It functions in the pathway sulfur metabolism; hydrogen sulfide biosynthesis; sulfite from sulfate: step 2/3. In terms of biological role, catalyzes the phosphorylation of adenosine 5'-phosphosulfate to 3'-phosphoadenylyl sulfate, which is the activated sulfate form for sulfation reactions. Essential for plant reproduction and viability. The chain is Adenylyl-sulfate kinase 4, chloroplastic (APK4) from Arabidopsis thaliana (Mouse-ear cress).